Reading from the N-terminus, the 88-residue chain is Small ribosomal subunit protein bS20 (88 aa).

Positions 1–25 (MANSAQARKRARQATKARAHNASLR) are disordered. Residues 7 to 19 (ARKRARQATKARA) show a composition bias toward basic residues.

Belongs to the bacterial ribosomal protein bS20 family.

In terms of biological role, binds directly to 16S ribosomal RNA. The protein is Small ribosomal subunit protein bS20 of Azoarcus sp. (strain BH72).